Reading from the N-terminus, the 444-residue chain is Type VII secretion system protein EssB (444 aa).

The Cytoplasmic portion of the chain corresponds to 1 to 229; that stretch reads MVKNHDPKNE…RKVGHTVFKW (229 aa). Residues 230-250 form a helical membrane-spanning segment; that stretch reads VAIGMTTLSVLLIAFLAFLYF. Over 251 to 444 the chain is Extracellular; it reads SVMKHNERIE…EKRQEAERKK (194 aa). The segment at 366–444 is disordered; it reads KNNGDLSNDK…EKRQEAERKK (79 aa). A compositionally biased stretch (basic and acidic residues) spans 372 to 444; that stretch reads SNDKRSEETK…EKRQEAERKK (73 aa). Positions 387 to 443 form a coiled coil; that stretch reads LQDILDKEKQVKDEKAKSEEEKAKAKDEKLKQQEENEKKQKEQAQKDKEKRQEAERK.

It belongs to the EssB family.

Its subcellular location is the cell membrane. In terms of biological role, component of the type VII secretion system (Ess). Required for the secretion of EsxA. This chain is Type VII secretion system protein EssB, found in Staphylococcus aureus (strain MRSA252).